The primary structure comprises 278 residues: Tryptophan synthase alpha chain (278 aa).

Catalysis depends on proton acceptor residues Glu61 and Asp72.

The protein belongs to the TrpA family. As to quaternary structure, tetramer of two alpha and two beta chains.

It catalyses the reaction (1S,2R)-1-C-(indol-3-yl)glycerol 3-phosphate + L-serine = D-glyceraldehyde 3-phosphate + L-tryptophan + H2O. The protein operates within amino-acid biosynthesis; L-tryptophan biosynthesis; L-tryptophan from chorismate: step 5/5. Functionally, the alpha subunit is responsible for the aldol cleavage of indoleglycerol phosphate to indole and glyceraldehyde 3-phosphate. The chain is Tryptophan synthase alpha chain from Shewanella oneidensis (strain ATCC 700550 / JCM 31522 / CIP 106686 / LMG 19005 / NCIMB 14063 / MR-1).